A 910-amino-acid chain; its full sequence is Protein translocase subunit SecA (910 aa).

Residues Gln86, 104 to 108, and Asp499 each bind ATP; that span reads GEGKT. Zn(2+) contacts are provided by Cys894, Cys896, Cys905, and His906.

The protein belongs to the SecA family. In terms of assembly, monomer and homodimer. Part of the essential Sec protein translocation apparatus which comprises SecA, SecYEG and auxiliary proteins SecDF-YajC and YidC. Zn(2+) serves as cofactor.

It localises to the cell inner membrane. Its subcellular location is the cytoplasm. It carries out the reaction ATP + H2O + cellular proteinSide 1 = ADP + phosphate + cellular proteinSide 2.. Functionally, part of the Sec protein translocase complex. Interacts with the SecYEG preprotein conducting channel. Has a central role in coupling the hydrolysis of ATP to the transfer of proteins into and across the cell membrane, serving both as a receptor for the preprotein-SecB complex and as an ATP-driven molecular motor driving the stepwise translocation of polypeptide chains across the membrane. This Rickettsia bellii (strain RML369-C) protein is Protein translocase subunit SecA.